The chain runs to 352 residues: Gap junction alpha-4 protein (352 aa).

At 2–23 the chain is on the cytoplasmic side; the sequence is GDWEFLEKLLDQVQEHSTSIGK. A helical membrane pass occupies residues 24 to 46; sequence IWLMVLFIFRILILGLAGESVWG. Residues 47-76 lie on the Extracellular side of the membrane; that stretch reads DEQSDFICNTEQPGCTNVCYDKAFPISHVR. A helical transmembrane segment spans residues 77–99; sequence YWVLQFLFVSTPTLFYLGHVIYL. At 100-153 the chain is on the cytoplasmic side; it reads SRREEKLKQKESELRALDDKEQVEQAIAIIEKKKMKLYIQEDGTVKIKGALMCT. A helical transmembrane segment spans residues 154–176; the sequence is YLTSVIFKSLFEAGFLLGQWYLY. Topologically, residues 177-208 are extracellular; the sequence is GFVMTPIYVCERVPCPHKVDCFVSRPMEKTIF. Residues 209–231 form a helical membrane-spanning segment; sequence IVFMLVVSLISLFLNVLELIHLV. The Cytoplasmic portion of the chain corresponds to 232 to 352; sequence CKSMIDTLKK…SSSASKKQYV (121 aa). Residues 330 to 352 are disordered; that stretch reads KTHSTMEKPSTRASSSASKKQYV. A compositionally biased stretch (polar residues) spans 340–352; it reads TRASSSASKKQYV.

The protein belongs to the connexin family. Alpha-type (group II) subfamily. A connexon is composed of a hexamer of connexins.

Its subcellular location is the cell membrane. The protein localises to the cell junction. It localises to the gap junction. Functionally, one gap junction consists of a cluster of closely packed pairs of transmembrane channels, the connexons, through which materials of low MW diffuse from one cell to a neighboring cell. In Xenopus tropicalis (Western clawed frog), this protein is Gap junction alpha-4 protein (gja4).